The chain runs to 251 residues: CDP-diacylglycerol pyrophosphatase (251 aa).

A helical transmembrane segment spans residues 4–24 (AGLLFLVMIVIAVVAAGIGYW).

The protein belongs to the Cdh family.

It is found in the cell inner membrane. The catalysed reaction is a CDP-1,2-diacyl-sn-glycerol + H2O = a 1,2-diacyl-sn-glycero-3-phosphate + CMP + 2 H(+). It functions in the pathway phospholipid metabolism; CDP-diacylglycerol degradation; phosphatidate from CDP-diacylglycerol: step 1/1. In Escherichia coli (strain ATCC 8739 / DSM 1576 / NBRC 3972 / NCIMB 8545 / WDCM 00012 / Crooks), this protein is CDP-diacylglycerol pyrophosphatase.